Here is a 359-residue protein sequence, read N- to C-terminus: S-adenosylmethionine:tRNA ribosyltransferase-isomerase (359 aa).

It belongs to the QueA family. In terms of assembly, monomer.

Its subcellular location is the cytoplasm. The catalysed reaction is 7-aminomethyl-7-carbaguanosine(34) in tRNA + S-adenosyl-L-methionine = epoxyqueuosine(34) in tRNA + adenine + L-methionine + 2 H(+). The protein operates within tRNA modification; tRNA-queuosine biosynthesis. Functionally, transfers and isomerizes the ribose moiety from AdoMet to the 7-aminomethyl group of 7-deazaguanine (preQ1-tRNA) to give epoxyqueuosine (oQ-tRNA). The sequence is that of S-adenosylmethionine:tRNA ribosyltransferase-isomerase from Colwellia psychrerythraea (strain 34H / ATCC BAA-681) (Vibrio psychroerythus).